The chain runs to 299 residues: Palmitoyltransferase ZDHHC3 (299 aa).

At 1–47 (MMLIPTHHFRDIERKPEYLQPEKCAPPPFPGPVGTMWFIRDGCGIAC) the chain is on the cytoplasmic side. Tyrosine 18 bears the Phosphotyrosine mark. The chain crosses the membrane as a helical span at residues 48-68 (AIVTWFLVLYAEFVVLFVMLI). Topologically, residues 69-72 (PSRD) are lumenal. The helical transmembrane segment at 73 to 93 (YAYSIINGIVFNLLAFLALAS) threads the bilayer. Over 94–171 (HCRAMLTDPG…NCVGENNQKY (78 aa)) the chain is Cytoplasmic. Positions 128–254 (KCPKCCSIKP…DETGIEQLKK (127 aa)) constitute a DHHC domain. Cysteine 146 is lipidated: S-palmitoyl cysteine. Cysteine 157 functions as the S-palmitoyl cysteine intermediate in the catalytic mechanism. A helical transmembrane segment spans residues 172-192 (FVLFTMYIALISLHALIMVGF). Over 193 to 214 (HFLHCFEEDWTKCSSFSPPTTV) the chain is Lumenal. The helical transmembrane segment at 215–235 (ILLILLCFEALLFLIFTSVMF) threads the bilayer. Over 236 to 299 (GTQVHSICTD…GKADPYQYVV (64 aa)) the chain is Cytoplasmic.

It belongs to the DHHC palmitoyltransferase family. Monomer. Homooligomers. The monomeric form has a higher catalytic activity. Forms heterooligomers with ZDHHC7. Interacts with TNFRSF10A. Post-translationally, phosphorylation by FGFR1 and SRC probably regulates the palmitoyltransferase activity. Autopalmitoylated.

Its subcellular location is the golgi apparatus membrane. The catalysed reaction is L-cysteinyl-[protein] + hexadecanoyl-CoA = S-hexadecanoyl-L-cysteinyl-[protein] + CoA. It catalyses the reaction L-cysteinyl-[protein] + tetradecanoyl-CoA = S-tetradecanoyl-L-cysteinyl-[protein] + CoA. It carries out the reaction L-cysteinyl-[protein] + octadecanoyl-CoA = S-octadecanoyl-L-cysteinyl-[protein] + CoA. Its function is as follows. Golgi-localized palmitoyltransferase that catalyzes the addition of palmitate onto various protein substrates. Has no stringent fatty acid selectivity and in addition to palmitate can also transfer onto target proteins myristate from tetradecanoyl-CoA and stearate from octadecanoyl-CoA. Plays an important role in G protein-coupled receptor signaling pathways involving GNAQ and potentially other heterotrimeric G proteins by regulating their dynamic association with the plasma membrane. Palmitoylates ITGA6 and ITGB4, thereby regulating the alpha-6/beta-4 integrin localization, expression and function in cell adhesion to laminin. Plays a role in the TRAIL-activated apoptotic signaling pathway most probably through the palmitoylation and localization to the plasma membrane of TNFRSF10A. In the brain, by palmitoylating the gamma subunit GABRG2 of GABA(A) receptors and regulating their postsynaptic accumulation, plays a role in synaptic GABAergic inhibitory function and GABAergic innervation. Palmitoylates the neuronal protein GAP43 which is also involved in the formation of GABAergic synapses. Palmitoylates NCDN thereby regulating its association with endosome membranes. Probably palmitoylates PRCD and is involved in its proper localization within the photoreceptor. Could mediate the palmitoylation of NCAM1 and regulate neurite outgrowth. Could palmitoylate DNAJC5 and regulate its localization to Golgi membranes. Also constitutively palmitoylates DLG4. May also palmitoylate SNAP25. Could palmitoylate the glutamate receptors GRIA1 and GRIA2 but this has not been confirmed in vivo. Could also palmitoylate the D(2) dopamine receptor DRD2. May also palmitoylate LAMTOR1, promoting its localization to lysosomal membranes. Palmitoylates the Toll-like receptor 9/TLR9 in the Golgi and thereby regulates TLR9 trafficking to endosomes. May palmitoylate CALHM1 and CALHM3 subunits of gustatory voltage-gated ion channels and modulate channel gating and kinetics. The polypeptide is Palmitoyltransferase ZDHHC3 (Rattus norvegicus (Rat)).